A 212-amino-acid chain; its full sequence is Putative aryl-alcohol dehydrogenase AAD6 (212 aa).

Tyrosine 76 serves as the catalytic Proton donor.

It belongs to the aldo/keto reductase family. Aldo/keto reductase 2 subfamily.

The polypeptide is Putative aryl-alcohol dehydrogenase AAD6 (Saccharomyces cerevisiae (strain ATCC 204508 / S288c) (Baker's yeast)).